The primary structure comprises 77 residues: Large ribosomal subunit protein uL29 (77 aa).

Belongs to the universal ribosomal protein uL29 family.

This Mycobacterium sp. (strain JLS) protein is Large ribosomal subunit protein uL29.